A 1713-amino-acid chain; its full sequence is Serine/threonine-protein kinase MRCK beta (1713 aa).

A Protein kinase domain is found at 76–342 (FEIIKVIGRG…IEDFKKHAFF (267 aa)). Residues 82 to 90 (IGRGAFGEV) and K105 contribute to the ATP site. Catalysis depends on D200, which acts as the Proton acceptor. Phosphoserine; by autocatalysis is present on residues S221 and S233. T239 carries the post-translational modification Phosphothreonine; by autocatalysis. Positions 343-413 (EGLNWENIRN…TTESCFSDRG (71 aa)) constitute an AGC-kinase C-terminal domain. At T423 the chain carries Phosphothreonine. Residues 434–649 (LENSLQIEAY…ASKERKLREH (216 aa)) are a coiled coil. R671 carries the omega-N-methylarginine modification. Coiled-coil stretches lie at residues 681 to 815 (QEIS…AHWE) and 878 to 939 (ELQS…FRAD). S927 is subject to Phosphoserine. Y954 is subject to Phosphotyrosine. The span at 971-994 (ASDQETQASKMDLSPSVSVATSTE) shows a compositional bias: polar residues. Residues 971–1022 (ASDQETQASKMDLSPSVSVATSTEQQEDMARPQQRPSPVPLPSTQALAMAGP) are disordered. The Phorbol-ester/DAG-type zinc-finger motif lies at 1026-1076 (AHQFSIKSFPSPTQCSHCTSLMVGLIRQGYACEVCAFSCHVSCKDSAPQVC). Residues 1096–1215 (GTAYKGYVKV…WVGILEGLQA (120 aa)) form the PH domain. In terms of domain architecture, CNH spans 1241 to 1515 (IKAVLAAAIV…RPLNSDGSLN (275 aa)). Residues 1585 to 1598 (ISNPTNFNHVAHMG) form the CRIB domain. Positions 1616-1713 (TVQEEKQGPT…EGLDQPSCDA (98 aa)) are disordered. Positions 1666-1677 (DFDKEPDSDSTK) are enriched in basic and acidic residues. Phosphoserine is present on residues S1682, S1684, S1688, S1692, and S1695.

The protein belongs to the protein kinase superfamily. AGC Ser/Thr protein kinase family. DMPK subfamily. As to quaternary structure, homodimer and homotetramer via the coiled coil regions. Interacts tightly with GTP-bound but not GDP-bound CDC42. Interacts with TJP1; this interaction requires the presence of catalytically active CDC42. Forms a tripartite complex with MYO18A and LURAP1 with the latter acting as an adapter connecting CDC42BPB and MYO18A. LURAP1 binding results in activation of CDC42BPB by abolition of its negative autoregulation. Interacts with STRIP1, STRN3 and SIKE1. Interacts with CPNE4 (via VWFA domain). Interacts with LURAP1. Interacts (via AGC-kinase C-terminal domain) with FAM89B/LRAP25 (via LRR repeat). Forms a tripartite complex with FAM89B/LRAP25 and LIMK1. Mg(2+) is required as a cofactor. Proteolytically cleaved by caspases upon apoptosis induction.

The protein resides in the cytoplasm. It is found in the cell membrane. The protein localises to the cell junction. It localises to the cell projection. Its subcellular location is the lamellipodium. The enzyme catalyses L-seryl-[protein] + ATP = O-phospho-L-seryl-[protein] + ADP + H(+). It catalyses the reaction L-threonyl-[protein] + ATP = O-phospho-L-threonyl-[protein] + ADP + H(+). With respect to regulation, maintained in an inactive, closed conformation by an interaction between the kinase domain and the negative autoregulatory C-terminal coiled-coil region. Agonist binding to the phorbol ester binding site disrupts this, releasing the kinase domain to allow N-terminus-mediated dimerization and kinase activation by transautophosphorylation. Inhibited by chelerythrine chloride. In terms of biological role, serine/threonine-protein kinase which is an important downstream effector of CDC42 and plays a role in the regulation of cytoskeleton reorganization and cell migration. Regulates actin cytoskeletal reorganization via phosphorylation of PPP1R12C and MYL9/MLC2. In concert with MYO18A and LURAP1, is involved in modulating lamellar actomyosin retrograde flow that is crucial to cell protrusion and migration. Phosphorylates PPP1R12A. In concert with FAM89B/LRAP25 mediates the targeting of LIMK1 to the lamellipodium resulting in its activation and subsequent phosphorylation of CFL1 which is important for lamellipodial F-actin regulation. In Mus musculus (Mouse), this protein is Serine/threonine-protein kinase MRCK beta.